A 332-amino-acid polypeptide reads, in one-letter code: MEHLGPHHLHPGHAEPISFGIEQILNSPDQGGCMGPNSRLQDGDYGLGCLVPGAYTYGGGGSAAGAGAGGTGAYGAGGPGGPGGPAGGGGGACSMGPLPGSYNVNMDLAGGPGPGGDGGGGGAARRALSAAGVIRVPAHRPLAGAVAHPQPLATGLPTVPSVPAVPGVNNLTGLTFPWMESNRRYTKDRFTGLPYQNRTPPKKKKPRTSFTRLQICELEKRFHRQKYLASAERAALAKALKMTDAQVKTWFQNRRTKWRRQTAEEREAESEQANRILLQLQQEAFQKSLAQPLPADPLCVHNSSLFALQNLQPWSDDSTKITSVTSVASACE.

Residues 203 to 262 (KKKPRTSFTRLQICELEKRFHRQKYLASAERAALAKALKMTDAQVKTWFQNRRTKWRRQT) constitute a DNA-binding region (homeobox). K238 is modified (N6-acetyllysine).

In terms of tissue distribution, expressed in various embryonic tissues, including branchial arches, some component of the nervous system and spleen.

The protein localises to the nucleus. Its function is as follows. Controls the genesis of the spleen. Binds to the DNA sequence 5'-GGCGGTAAGTGG-3'. This Mus musculus (Mouse) protein is T-cell leukemia homeobox protein 1 (Tlx1).